The chain runs to 149 residues: Probable conjugal transfer protein TrbE part 1 (149 aa).

Belongs to the TrbE/VirB4 family.

This Sinorhizobium fredii (strain NBRC 101917 / NGR234) protein is Probable conjugal transfer protein TrbE part 1 (trbEA).